Reading from the N-terminus, the 382-residue chain is tRNA-specific 2-thiouridylase MnmA (382 aa).

Residues 34–41 (AMSGGVDS) and leucine 60 each bind ATP. Cysteine 128 serves as the catalytic Nucleophile. A disulfide bond links cysteine 128 and cysteine 224. Glycine 152 is an ATP binding site. The interval 174–176 (RDQ) is interaction with tRNA. Cysteine 224 serves as the catalytic Cysteine persulfide intermediate.

This sequence belongs to the MnmA/TRMU family.

It localises to the cytoplasm. The catalysed reaction is S-sulfanyl-L-cysteinyl-[protein] + uridine(34) in tRNA + AH2 + ATP = 2-thiouridine(34) in tRNA + L-cysteinyl-[protein] + A + AMP + diphosphate + H(+). Functionally, catalyzes the 2-thiolation of uridine at the wobble position (U34) of tRNA, leading to the formation of s(2)U34. The sequence is that of tRNA-specific 2-thiouridylase MnmA from Sphingopyxis alaskensis (strain DSM 13593 / LMG 18877 / RB2256) (Sphingomonas alaskensis).